We begin with the raw amino-acid sequence, 966 residues long: Aminopeptidase N (966 aa).

At 1–8 (MAKGFYIS) the chain is on the cytoplasmic side. A helical; Signal-anchor for type II membrane protein membrane pass occupies residues 9–32 (KTLGILGILLGVAAVCTIIALSVV). Residues 33–68 (YAQEKNRNAENSATAPTLPGSTSATTATTTPAVDES) are cytosolic Ser/Thr-rich junction. Over 33 to 966 (YAQEKNRNAE…VFKWFTENSS (934 aa)) the chain is Extracellular. The disordered stretch occupies residues 42 to 64 (ENSATAPTLPGSTSATTATTTPA). Residues 44 to 64 (SATAPTLPGSTSATTATTTPA) are compositionally biased toward low complexity. Residues 69–966 (KPWNQYRLPK…VFKWFTENSS (898 aa)) are metalloprotease. N-linked (GlcNAc...) asparagine glycans are attached at residues Asn106, Asn114, and Asn128. Position 176 is a sulfotyrosine (Tyr176). 4 N-linked (GlcNAc...) asparagine glycosylation sites follow: Asn234, Asn288, Asn318, and Asn332. 351-355 (GAMEN) is a binding site for substrate. His387 provides a ligand contact to Zn(2+). Glu388 serves as the catalytic Proton acceptor. Residues His391 and Glu410 each contribute to the Zn(2+) site. Sulfotyrosine occurs at positions 418 and 423. 4 N-linked (GlcNAc...) asparagine glycosylation sites follow: Asn573, Asn606, Asn624, and Asn734. A disulfide bridge links Cys760 with Cys767. Residues Asn784 and Asn817 are each glycosylated (N-linked (GlcNAc...) asparagine). Residues Cys797 and Cys833 are joined by a disulfide bond. Position 852 is a phosphotyrosine (Tyr852).

This sequence belongs to the peptidase M1 family. In terms of assembly, homodimer. Interacts with SLC6A19. Zn(2+) serves as cofactor. Post-translationally, N- and O-glycosylated. In terms of processing, sulfated. May undergo proteolysis and give rise to a soluble form. In terms of tissue distribution, expressed in the intestinal brush border (at protein level). Highly expressed in intestinal tract and kidney, present in liver, lymph node, spleen, and brain. Found as well in monocytes, macrophages, dendritic cells, veiled cells and B-cells but not on T-cells and thymocytes.

It localises to the cell membrane. The enzyme catalyses Release of an N-terminal amino acid, Xaa-|-Yaa- from a peptide, amide or arylamide. Xaa is preferably Ala, but may be most amino acids including Pro (slow action). When a terminal hydrophobic residue is followed by a prolyl residue, the two may be released as an intact Xaa-Pro dipeptide.. Its function is as follows. Broad specificity aminopeptidase which plays a role in the final digestion of peptides generated from hydrolysis of proteins by gastric and pancreatic proteases. Also involved in the processing of various peptides including peptide hormones, such as angiotensin III and IV, neuropeptides, and chemokines. May also be involved the cleavage of peptides bound to major histocompatibility complex class II molecules of antigen presenting cells. May have a role in angiogenesis and promote cholesterol crystallization. May have a role in amino acid transport by acting as binding partner of amino acid transporter SLC6A19 and regulating its activity. In Mus musculus (Mouse), this protein is Aminopeptidase N (Anpep).